The primary structure comprises 299 residues: Oxygen-dependent coproporphyrinogen-III oxidase (299 aa).

Residue serine 92 participates in substrate binding. 2 residues coordinate Mn(2+): histidine 96 and histidine 106. Catalysis depends on histidine 106, which acts as the Proton donor. 108-110 contributes to the substrate binding site; sequence NVR. Mn(2+)-binding residues include histidine 145 and histidine 175. The important for dimerization stretch occupies residues 240-275; it reads YVEFNLVWDRGTLFGLQTGGRTESILMSMPPLVRWE. A substrate-binding site is contributed by 258 to 260; that stretch reads GGR.

It belongs to the aerobic coproporphyrinogen-III oxidase family. As to quaternary structure, homodimer. Requires Mn(2+) as cofactor.

It localises to the cytoplasm. It catalyses the reaction coproporphyrinogen III + O2 + 2 H(+) = protoporphyrinogen IX + 2 CO2 + 2 H2O. Its pathway is porphyrin-containing compound metabolism; protoporphyrin-IX biosynthesis; protoporphyrinogen-IX from coproporphyrinogen-III (O2 route): step 1/1. Involved in the heme biosynthesis. Catalyzes the aerobic oxidative decarboxylation of propionate groups of rings A and B of coproporphyrinogen-III to yield the vinyl groups in protoporphyrinogen-IX. This Escherichia coli (strain K12 / MC4100 / BW2952) protein is Oxygen-dependent coproporphyrinogen-III oxidase.